A 399-amino-acid polypeptide reads, in one-letter code: 3-methyl-2-oxobutanoate hydroxymethyltransferase 2, mitochondrial (399 aa).

The transit peptide at 1 to 90 (MSFSRLLTPR…ARRVTLATLR (90 aa)) directs the protein to the mitochondrion. Residues D125 and D164 each contribute to the Mg(2+) site. 3-methyl-2-oxobutanoate is bound by residues 125-126 (DS), D164, and K194. A Mg(2+)-binding site is contributed by E196. E264 functions as the Proton acceptor in the catalytic mechanism.

This sequence belongs to the PanB family. The cofactor is Mg(2+).

It localises to the mitochondrion. The catalysed reaction is 3-methyl-2-oxobutanoate + (6R)-5,10-methylene-5,6,7,8-tetrahydrofolate + H2O = 2-dehydropantoate + (6S)-5,6,7,8-tetrahydrofolate. It functions in the pathway cofactor biosynthesis; (R)-pantothenate biosynthesis; (R)-pantoate from 3-methyl-2-oxobutanoate: step 1/2. Its function is as follows. Catalyzes the reversible reaction in which hydroxymethyl group from 5,10-methylenetetrahydrofolate is transferred onto alpha-ketoisovalerate to form ketopantoate. This is 3-methyl-2-oxobutanoate hydroxymethyltransferase 2, mitochondrial (KPHMT2) from Oryza sativa subsp. japonica (Rice).